Here is a 397-residue protein sequence, read N- to C-terminus: Pentatricopeptide repeat-containing protein At1g80150, mitochondrial (397 aa).

A mitochondrion-targeting transit peptide spans 1–81 (MLSLRHIRRF…FAFEDTVSRL (81 aa)). PPR repeat units follow at residues 105 to 139 (REGFIVRIIMLYGKAGMTKQALDTFFNMDLYGCKR), 140 to 170 (SVKSFNAALQVLSFNPDLHTIWEFLHDAPSK), 176 to 210 (DAVSFNIAIKSFCELGILDGAYMAMREMEKSGLTP), 211 to 245 (DVVTYTTLISALYKHERCVIGNGLWNLMVLKGCKP), 246 to 280 (NLTTFNVRIQFLVNRRRAWDANDLLLLMPKLQVEP), 281 to 315 (DSITYNMVIKGFFLARFPDMAERVYTAMHGKGYKP), 316 to 350 (NLKIYQTMIHYLCKAGNFDLAYTMCKDCMRKKWYP), and 351 to 381 (NLDTVEMLLKGLVKKGQLDQAKSIMELVHRR).

It belongs to the PPR family. P subfamily.

The protein localises to the mitochondrion. This chain is Pentatricopeptide repeat-containing protein At1g80150, mitochondrial, found in Arabidopsis thaliana (Mouse-ear cress).